We begin with the raw amino-acid sequence, 131 residues long: Small ribosomal subunit protein uS11 (131 aa).

It belongs to the universal ribosomal protein uS11 family. Part of the 30S ribosomal subunit. Interacts with proteins S7 and S18. Binds to IF-3.

In terms of biological role, located on the platform of the 30S subunit, it bridges several disparate RNA helices of the 16S rRNA. Forms part of the Shine-Dalgarno cleft in the 70S ribosome. The sequence is that of Small ribosomal subunit protein uS11 from Deinococcus geothermalis (strain DSM 11300 / CIP 105573 / AG-3a).